Reading from the N-terminus, the 332-residue chain is Methionine synthase (332 aa).

Zn(2+) is bound by residues His-211, Cys-213, and Cys-296.

This sequence belongs to the archaeal MetE family. It depends on Zn(2+) as a cofactor.

It participates in amino-acid biosynthesis; L-methionine biosynthesis via de novo pathway. Catalyzes the transfer of a methyl group to L-homocysteine resulting in methionine formation. The physiological methyl donor is unknown. This chain is Methionine synthase, found in Saccharolobus islandicus (strain Y.N.15.51 / Yellowstone #2) (Sulfolobus islandicus).